Consider the following 136-residue polypeptide: Peptide methionine sulfoxide reductase MsrB (136 aa).

A MsrB domain is found at 6-128 (EVSLYKELTD…NSAALSFTDE (123 aa)). Positions 45, 48, 94, and 97 each coordinate Zn(2+). Cys117 functions as the Nucleophile in the catalytic mechanism.

It belongs to the MsrB Met sulfoxide reductase family. Zn(2+) serves as cofactor.

The catalysed reaction is L-methionyl-[protein] + [thioredoxin]-disulfide + H2O = L-methionyl-(R)-S-oxide-[protein] + [thioredoxin]-dithiol. This is Peptide methionine sulfoxide reductase MsrB from Photorhabdus laumondii subsp. laumondii (strain DSM 15139 / CIP 105565 / TT01) (Photorhabdus luminescens subsp. laumondii).